We begin with the raw amino-acid sequence, 395 residues long: uncharacterized protein (395 aa).

This is an uncharacterized protein from Methanocaldococcus jannaschii (strain ATCC 43067 / DSM 2661 / JAL-1 / JCM 10045 / NBRC 100440) (Methanococcus jannaschii).